The sequence spans 289 residues: MPFPDFDPVLVQLGPLAIRWYALAYVAGILLGWRYAVAMVKNPRLWTHRPPPVTTEQVDDFILWVTLAIIVGGRLGHVLFYTPQIIWTDPLQILQIWNGGMSFHGGAIGVFLAIILFAMRNKVDLWRLGDLVAAVVPIGLFFGRVANFINGELWGRPTDAPWGVVFCNERIRETLGWCPAGEVARHPSQLYEAALEGIVLFLILRWATHGAKLLNRRGVVMGLFTTFYAVFRISLENVRQPDAGLENLPLGLTMGIYLSIPMLLFGLWLIWRGMREETPPALAPADKPA.

3 helical membrane-spanning segments follow: residues 13–33 (LGPL…LLGW), 61–81 (FILW…VLFY), and 99–119 (GGMS…LFAM). Arginine 144 is an a 1,2-diacyl-sn-glycero-3-phospho-(1'-sn-glycerol) binding site. The next 2 helical transmembrane spans lie at 218–238 (GVVM…LENV) and 250–270 (LGLT…LWLI).

This sequence belongs to the Lgt family.

Its subcellular location is the cell inner membrane. The catalysed reaction is L-cysteinyl-[prolipoprotein] + a 1,2-diacyl-sn-glycero-3-phospho-(1'-sn-glycerol) = an S-1,2-diacyl-sn-glyceryl-L-cysteinyl-[prolipoprotein] + sn-glycerol 1-phosphate + H(+). It functions in the pathway protein modification; lipoprotein biosynthesis (diacylglyceryl transfer). Catalyzes the transfer of the diacylglyceryl group from phosphatidylglycerol to the sulfhydryl group of the N-terminal cysteine of a prolipoprotein, the first step in the formation of mature lipoproteins. The protein is Phosphatidylglycerol--prolipoprotein diacylglyceryl transferase of Phenylobacterium zucineum (strain HLK1).